Consider the following 489-residue polypeptide: Glycogen synthase (489 aa).

Arg-20 serves as a coordination point for ADP-alpha-D-glucose.

This sequence belongs to the glycosyltransferase 1 family. Bacterial/plant glycogen synthase subfamily.

The catalysed reaction is [(1-&gt;4)-alpha-D-glucosyl](n) + ADP-alpha-D-glucose = [(1-&gt;4)-alpha-D-glucosyl](n+1) + ADP + H(+). Its pathway is glycan biosynthesis; glycogen biosynthesis. In terms of biological role, synthesizes alpha-1,4-glucan chains using ADP-glucose. The polypeptide is Glycogen synthase (Pelodictyon phaeoclathratiforme (strain DSM 5477 / BU-1)).